Consider the following 409-residue polypeptide: Nucleoprotein (409 aa).

Disordered stretches follow at residues 1–84 (MASG…KGGR) and 121–194 (ADTK…DSGD). Low complexity predominate over residues 15-31 (PVIKLGGPKPPKVGSSG). An RNA-binding region spans residues 29 to 160 (SSGNASWFQA…GNFRWDFIPL (132 aa)). A CoV N NTD domain is found at 31–156 (GNASWFQAIK…GGPDGNFRWD (126 aa)). Positions 70-84 (YWRRQARFKPGKGGR) are enriched in basic residues. Low complexity predominate over residues 162 to 179 (RGRSGRSTAASSAAASRA). The segment covering 180 to 192 (PSREGSRGRRSDS) has biased composition (basic and acidic residues). Phosphoserine; by host is present on residues serine 190 and serine 192. In terms of domain architecture, CoV N CTD spans 215-331 (TKAKADEMAH…QCVDGVGTRP (117 aa)). Residues 226 to 333 (RYCKRTIPPN…VDGVGTRPKD (108 aa)) form a dimerization region. Cystine bridges form between cysteine 281/cysteine 308 and cysteine 320/cysteine 323. Residues 327–396 (VGTRPKDDEP…QLEFYDEPKV (70 aa)) are disordered. A compositionally biased stretch (basic residues) spans 358–367 (QRPKKEKKLK). The span at 368–384 (KQDDEADKALTSDEERN) shows a compositional bias: basic and acidic residues. Threonine 378 is modified (phosphothreonine; by host). A Phosphoserine; by host modification is found at serine 379.

The protein belongs to the gammacoronavirus nucleocapsid protein family. As to quaternary structure, homooligomer. Both monomeric and oligomeric forms interact with RNA. Interacts with protein M. Interacts with NSP3; this interaction serves to tether the genome to the newly translated replicase-transcriptase complex at a very early stage of infection. In terms of processing, ADP-ribosylated. The ADP-ribosylation is retained in the virion during infection. Post-translationally, phosphorylated on serine and threonine residues.

The protein resides in the virion. It localises to the host endoplasmic reticulum-Golgi intermediate compartment. The protein localises to the host Golgi apparatus. Its function is as follows. Packages the positive strand viral genome RNA into a helical ribonucleocapsid (RNP) and plays a fundamental role during virion assembly through its interactions with the viral genome and membrane protein M. Plays an important role in enhancing the efficiency of subgenomic viral RNA transcription as well as viral replication. This is Nucleoprotein from Gallus gallus (Chicken).